The primary structure comprises 249 residues: 3-deoxy-manno-octulosonate cytidylyltransferase (249 aa).

This sequence belongs to the KdsB family.

It localises to the cytoplasm. The enzyme catalyses 3-deoxy-alpha-D-manno-oct-2-ulosonate + CTP = CMP-3-deoxy-beta-D-manno-octulosonate + diphosphate. Its pathway is nucleotide-sugar biosynthesis; CMP-3-deoxy-D-manno-octulosonate biosynthesis; CMP-3-deoxy-D-manno-octulosonate from 3-deoxy-D-manno-octulosonate and CTP: step 1/1. It functions in the pathway bacterial outer membrane biogenesis; lipopolysaccharide biosynthesis. Activates KDO (a required 8-carbon sugar) for incorporation into bacterial lipopolysaccharide in Gram-negative bacteria. This Brucella anthropi (strain ATCC 49188 / DSM 6882 / CCUG 24695 / JCM 21032 / LMG 3331 / NBRC 15819 / NCTC 12168 / Alc 37) (Ochrobactrum anthropi) protein is 3-deoxy-manno-octulosonate cytidylyltransferase.